A 115-amino-acid polypeptide reads, in one-letter code: Divalent-cation tolerance protein CutA (115 aa).

Positions 19, 86, and 87 each coordinate Cu cation.

This sequence belongs to the CutA family. In terms of assembly, homotrimer. Requires Cu cation as cofactor.

It is found in the cytoplasm. In terms of biological role, involved in resistance toward heavy metals. The chain is Divalent-cation tolerance protein CutA from Salmonella agona (strain SL483).